Here is a 372-residue protein sequence, read N- to C-terminus: UDP-2-acetamido-2,6-beta-L-arabino-hexul-4-ose reductase (372 aa).

Residues 7 to 30 (GANG…EVVP), Leu53, Tyr103, and Lys107 each bind NAD(+). Tyr103 serves as the catalytic Proton acceptor. Residues Asn132 and 279 to 282 (HPGV) each bind substrate.

This sequence belongs to the NAD(P)-dependent epimerase/dehydratase family. As to quaternary structure, homodimer.

It carries out the reaction UDP-2-acetamido-2,6-dideoxy-beta-L-arabino-hex-4-ulose + NADH + H(+) = UDP-2-acetamido-2,6-dideoxy-beta-L-talose + NAD(+). The enzyme catalyses UDP-2-acetamido-2,6-dideoxy-beta-L-arabino-hex-4-ulose + NADPH + H(+) = UDP-2-acetamido-2,6-dideoxy-beta-L-talose + NADP(+). The protein operates within bacterial outer membrane biogenesis; LPS O-antigen biosynthesis. Functionally, bifunctional enzyme that mediates C-3 epimerization of the second intermediate followed by reduction at C-4 during serogroup O11 O-antigen biosynthesis, thus catalyzing the conversion of UDP-N-acetyl-D-glucosamine to precursors for the biosynthesis of O antigen. In Pseudomonas aeruginosa (strain ATCC 29260 / BCRC 12902 / CIP 102967 / NCIMB 11965 / PA103), this protein is UDP-2-acetamido-2,6-beta-L-arabino-hexul-4-ose reductase.